A 116-amino-acid chain; its full sequence is Peptidyl-tRNA hydrolase (116 aa).

It belongs to the PTH2 family.

The protein localises to the cytoplasm. It carries out the reaction an N-acyl-L-alpha-aminoacyl-tRNA + H2O = an N-acyl-L-amino acid + a tRNA + H(+). Its function is as follows. The natural substrate for this enzyme may be peptidyl-tRNAs which drop off the ribosome during protein synthesis. The sequence is that of Peptidyl-tRNA hydrolase (pth) from Methanococcus maripaludis (strain DSM 14266 / JCM 13030 / NBRC 101832 / S2 / LL).